The following is a 294-amino-acid chain: Pyrroline-5-carboxylate reductase (294 aa).

This sequence belongs to the pyrroline-5-carboxylate reductase family.

It is found in the cytoplasm. It carries out the reaction L-proline + NADP(+) = (S)-1-pyrroline-5-carboxylate + NADPH + 2 H(+). It catalyses the reaction L-proline + NAD(+) = (S)-1-pyrroline-5-carboxylate + NADH + 2 H(+). The protein operates within amino-acid biosynthesis; L-proline biosynthesis; L-proline from L-glutamate 5-semialdehyde: step 1/1. In terms of biological role, catalyzes the reduction of 1-pyrroline-5-carboxylate (PCA) to L-proline. The sequence is that of Pyrroline-5-carboxylate reductase from Mycobacterium leprae (strain TN).